The following is a 402-amino-acid chain: Multidrug resistance protein MdtH (402 aa).

11 consecutive transmembrane segments (helical) span residues Tyr-13–Ile-33, Ser-34–Leu-54, Pro-99–Phe-116, Ile-139–Leu-159, Leu-165–Leu-185, Val-214–Met-234, Ala-243–Ile-263, Leu-277–Leu-297, Leu-300–Thr-320, Leu-340–Gly-360, and Pro-369–Ser-389.

The protein belongs to the major facilitator superfamily. DHA1 family. MdtH (TC 2.A.1.2.21) subfamily.

It is found in the cell inner membrane. This chain is Multidrug resistance protein MdtH, found in Klebsiella pneumoniae subsp. pneumoniae (strain ATCC 700721 / MGH 78578).